The following is a 360-amino-acid chain: Phospho-N-acetylmuramoyl-pentapeptide-transferase (360 aa).

The next 10 helical transmembrane spans lie at 21-41, 73-93, 94-114, 132-152, 168-188, 199-219, 239-259, 263-283, 288-308, and 338-358; these read YITV…LWIG, TMGG…WANL, ANPY…IGFV, WKYF…YWLG, IMPQ…VGTG, GLAI…AWAT, VVVF…FNTY, VFMG…VAIL, FLLV…ILQV, and VIIR…VTLK.

Belongs to the glycosyltransferase 4 family. MraY subfamily. Mg(2+) is required as a cofactor.

The protein localises to the cell inner membrane. It catalyses the reaction UDP-N-acetyl-alpha-D-muramoyl-L-alanyl-gamma-D-glutamyl-meso-2,6-diaminopimeloyl-D-alanyl-D-alanine + di-trans,octa-cis-undecaprenyl phosphate = di-trans,octa-cis-undecaprenyl diphospho-N-acetyl-alpha-D-muramoyl-L-alanyl-D-glutamyl-meso-2,6-diaminopimeloyl-D-alanyl-D-alanine + UMP. It functions in the pathway cell wall biogenesis; peptidoglycan biosynthesis. Catalyzes the initial step of the lipid cycle reactions in the biosynthesis of the cell wall peptidoglycan: transfers peptidoglycan precursor phospho-MurNAc-pentapeptide from UDP-MurNAc-pentapeptide onto the lipid carrier undecaprenyl phosphate, yielding undecaprenyl-pyrophosphoryl-MurNAc-pentapeptide, known as lipid I. The chain is Phospho-N-acetylmuramoyl-pentapeptide-transferase from Haemophilus influenzae (strain ATCC 51907 / DSM 11121 / KW20 / Rd).